A 251-amino-acid chain; its full sequence is Ditrans,polycis-undecaprenyl-diphosphate synthase ((2E,6E)-farnesyl-diphosphate specific) (251 aa).

The active site involves D21. D21 contacts Mg(2+). Substrate is bound by residues G22–R25, W26, H38, and S66–E68. The active-site Proton acceptor is N69. Residues W70, R72, R189, and R195–S197 contribute to the substrate site. E208 is a binding site for Mg(2+).

It belongs to the UPP synthase family. In terms of assembly, homodimer. The cofactor is Mg(2+).

It catalyses the reaction 8 isopentenyl diphosphate + (2E,6E)-farnesyl diphosphate = di-trans,octa-cis-undecaprenyl diphosphate + 8 diphosphate. Its function is as follows. Catalyzes the sequential condensation of isopentenyl diphosphate (IPP) with (2E,6E)-farnesyl diphosphate (E,E-FPP) to yield (2Z,6Z,10Z,14Z,18Z,22Z,26Z,30Z,34E,38E)-undecaprenyl diphosphate (di-trans,octa-cis-UPP). UPP is the precursor of glycosyl carrier lipid in the biosynthesis of bacterial cell wall polysaccharide components such as peptidoglycan and lipopolysaccharide. The polypeptide is Ditrans,polycis-undecaprenyl-diphosphate synthase ((2E,6E)-farnesyl-diphosphate specific) (Pseudomonas syringae pv. tomato (strain ATCC BAA-871 / DC3000)).